The sequence spans 622 residues: Histone-arginine methyltransferase CARMER (622 aa).

The SAM-dependent MTase PRMT-type domain maps to 118-425; the sequence is ASQYFQFYGY…QRQSYDVEID (308 aa). Residues Gln-131, Arg-140, Gly-164, Glu-186, Glu-215, and Thr-243 each coordinate S-adenosyl-L-methionine. Arg-478 bears the Asymmetric dimethylarginine; by autocatalysis mark. Disordered regions lie at residues 513 to 556 and 602 to 622; these read ANGG…QQQQ and QPILNSHHHHPGQPIHGNQFY. The segment covering 536–556 has biased composition (low complexity); the sequence is QQQQQQQQQQQQAAVGPQQQQ.

This sequence belongs to the class I-like SAM-binding methyltransferase superfamily. Protein arginine N-methyltransferase family. In terms of assembly, homodimer. The dimethylated protein is the major form.

It is found in the cytoplasm. The protein localises to the nucleus. The catalysed reaction is L-arginyl-[protein] + 2 S-adenosyl-L-methionine = N(omega),N(omega)-dimethyl-L-arginyl-[protein] + 2 S-adenosyl-L-homocysteine + 2 H(+). Its function is as follows. Methylates (mono- and asymmetric dimethylation) the guanidino nitrogens of arginyl residues in proteins. May methylate histone H3 at 'Arg-17' and activate transcription via chromatin remodeling. This is Histone-arginine methyltransferase CARMER from Anopheles gambiae (African malaria mosquito).